The chain runs to 566 residues: E3 ubiquitin-protein ligase Rnf220 (566 aa).

Lys-277 participates in a covalent cross-link: Glycyl lysine isopeptide (Lys-Gly) (interchain with G-Cter in SUMO2). Residues Lys-277–Arg-300 form a disordered region. The segment covering Ala-291–Arg-300 has biased composition (basic and acidic residues). Ser-390 is subject to Phosphoserine. Positions Glu-485 to Lys-513 form a coiled coil. Positions Cys-514–Ser-522 are required for targeting to the cytoplasm. The RING-type zinc finger occupies Cys-514–Asn-553.

In terms of assembly, interacts with SIN3B. Interacts with CTNNB1 (via Armadillo repeats 2-8). Interacts with USP7 (via MATH domain). Auto-ubiquitinated; leads to proteasomal degradation. In terms of tissue distribution, in the brain, expressed in the hippocampus, telenecephalon and cerebellum. No expression in astro glial cells or in neural progenitor cells.

Its subcellular location is the cytoplasm. It is found in the nucleus. The enzyme catalyses S-ubiquitinyl-[E2 ubiquitin-conjugating enzyme]-L-cysteine + [acceptor protein]-L-lysine = [E2 ubiquitin-conjugating enzyme]-L-cysteine + N(6)-ubiquitinyl-[acceptor protein]-L-lysine.. The protein operates within protein modification; protein ubiquitination. Functionally, E3 ubiquitin-protein ligase that promotes the ubiquitination and proteasomal degradation of SIN3B. Independently of its E3 ligase activity, acts as a CTNNB1 stabilizer through USP7-mediated deubiquitination of CTNNB1 and promotes Wnt signaling. Plays a critical role in the regulation of nuclear lamina. The polypeptide is E3 ubiquitin-protein ligase Rnf220 (Rnf220) (Mus musculus (Mouse)).